The sequence spans 301 residues: Protein KTI12 homolog (301 aa).

Gly8–Ser15 serves as a coordination point for ATP. The tract at residues Leu262–Leu275 is calmodulin-binding.

Belongs to the KTI12 family. Interacts with the elongator complex. Binds to calmodulin in a calcium-dependent manner.

The protein resides in the cytoplasm. It localises to the nucleus. Functionally, elongator complex-associated factor that is not a structural subunit but rather transiently contacts the complex. Regulates both meristem activity and organ growth; acts as a positive regulator of adaxial leaf patterning. Required for an early step in synthesis of 5-carbamoylmethyl (ncm5) groups present on uridines (ncm5U) at the wobble position in tRNA. The chain is Protein KTI12 homolog from Oryza sativa subsp. indica (Rice).